The chain runs to 58 residues: COP9 signalosome complex subunit 6b (58 aa).

It belongs to the peptidase M67A family. CSN6 subfamily. As to quaternary structure, component of the CSN complex, probably composed of CSN1, CSN2, CSN3, CSN4, CSN5 (CSN5A or CSN5B), CSN6 (CSN6A or CSN6B), CSN7 and CSN8.

It localises to the cytoplasm. It is found in the nucleus. Functionally, component of the COP9 signalosome complex (CSN), a complex involved in various cellular and developmental processes such as photomorphogenesis and auxin and jasmonate responses. The CSN complex is an essential regulator of the ubiquitin (Ubl) conjugation pathway by mediating the deneddylation of the cullin subunits of SCF-type E3 ligase complexes, leading to decrease the Ubl ligase activity of SCF. It is involved in repression of photomorphogenesis in darkness by regulating the activity of COP1-containing Ubl ligase complexes. The polypeptide is COP9 signalosome complex subunit 6b (CSN6B) (Brassica oleracea (Wild cabbage)).